A 1057-amino-acid polypeptide reads, in one-letter code: DNA-directed RNA polymerase subunit beta' (1057 aa).

Zn(2+) is bound by residues Cys60, Cys62, Cys75, and Cys78. Positions 449, 451, and 453 each coordinate Mg(2+). Residues Cys822, Cys896, Cys903, and Cys906 each contribute to the Zn(2+) site.

It belongs to the RNA polymerase beta' chain family. In terms of assembly, the RNAP catalytic core consists of 2 alpha, 1 beta, 1 beta' and 1 omega subunit. When a sigma factor is associated with the core the holoenzyme is formed, which can initiate transcription. Mg(2+) serves as cofactor. Requires Zn(2+) as cofactor.

The enzyme catalyses RNA(n) + a ribonucleoside 5'-triphosphate = RNA(n+1) + diphosphate. Functionally, DNA-dependent RNA polymerase catalyzes the transcription of DNA into RNA using the four ribonucleoside triphosphates as substrates. The sequence is that of DNA-directed RNA polymerase subunit beta' from Staphylococcus aureus.